Reading from the N-terminus, the 495-residue chain is Aspartyl/glutamyl-tRNA(Asn/Gln) amidotransferase subunit B (495 aa).

Belongs to the GatB/GatE family. GatB subfamily. Heterotrimer of A, B and C subunits.

The enzyme catalyses L-glutamyl-tRNA(Gln) + L-glutamine + ATP + H2O = L-glutaminyl-tRNA(Gln) + L-glutamate + ADP + phosphate + H(+). The catalysed reaction is L-aspartyl-tRNA(Asn) + L-glutamine + ATP + H2O = L-asparaginyl-tRNA(Asn) + L-glutamate + ADP + phosphate + 2 H(+). In terms of biological role, allows the formation of correctly charged Asn-tRNA(Asn) or Gln-tRNA(Gln) through the transamidation of misacylated Asp-tRNA(Asn) or Glu-tRNA(Gln) in organisms which lack either or both of asparaginyl-tRNA or glutaminyl-tRNA synthetases. The reaction takes place in the presence of glutamine and ATP through an activated phospho-Asp-tRNA(Asn) or phospho-Glu-tRNA(Gln). This Methanosarcina mazei (strain ATCC BAA-159 / DSM 3647 / Goe1 / Go1 / JCM 11833 / OCM 88) (Methanosarcina frisia) protein is Aspartyl/glutamyl-tRNA(Asn/Gln) amidotransferase subunit B.